The following is a 418-amino-acid chain: Ankyrin repeat domain-containing protein 61 (418 aa).

ANK repeat units lie at residues 27–57 (ALHS…NQPL), 74–103 (QPIF…DPEV), 131–160 (TRIQ…QVNA), 166–195 (NKHS…QVNA), 199–228 (SSMT…NVNC), 233–272 (TGNT…QVNA), 276–305 (EGQT…NVNI), and 309–342 (NGES…PLRL).

The sequence is that of Ankyrin repeat domain-containing protein 61 (Ankrd61) from Rattus norvegicus (Rat).